The primary structure comprises 736 residues: Na(+)/H(+) antiporter NhaA (736 aa).

Residues 1 to 387 (MNHSPQSARP…ICGYLLLRAA (387 aa)) form a na(+)/H(+) antiporter NhaA region. 12 helical membrane passes run 23-43 (AGGITLMAAAALALIVANSPF), 58-78 (LSLAHWINDALMAIFFLLVGL), 96-116 (MLPGIAAAGGVILPAIIFAVL), 126-146 (GWAVPSATDIAFALGVLSLLG), 155-175 (VFLATLAILDDLAAVVIIAIF), 178-198 (AEISMPYLGAAFITAAVLFVM), 201-221 (MGVVKLLPYLISAVILWFFVF), 224-244 (GVHATVAGVVAALMIPLKPAP), 265-285 (VAFIVVPIFGFANAGISFKGL), 298-318 (ILLGLFLGKQFGVFGAAWLAI), 334-354 (LYGVAILCGIGFTMSIFIGLL), and 367-387 (IGVLSGSALSAICGYLLLRAA). The peptidase S49 stretch occupies residues 388-736 (RPDQSAANPL…EKAIWARYGL (349 aa)).

It in the N-terminal section; belongs to the NhaA Na(+)/H(+) (TC 2.A.33) antiporter family. In the C-terminal section; belongs to the peptidase S49 family.

It localises to the cell inner membrane. The enzyme catalyses Na(+)(in) + 2 H(+)(out) = Na(+)(out) + 2 H(+)(in). Functionally, na(+)/H(+) antiporter that extrudes sodium in exchange for external protons. The sequence is that of Na(+)/H(+) antiporter NhaA from Brucella abortus (strain 2308).